Consider the following 235-residue polypeptide: Proteasome subunit alpha type-2-B (235 aa).

Residue Lys-64 forms a Glycyl lysine isopeptide (Lys-Gly) (interchain with G-Cter in ubiquitin) linkage.

The protein belongs to the peptidase T1A family. In terms of assembly, component of the 20S core complex of the 26S proteasome. The 26S proteasome is composed of a core protease (CP), known as the 20S proteasome, capped at one or both ends by the 19S regulatory particle (RP/PA700). The 20S proteasome core is composed of 28 subunits that are arranged in four stacked rings, resulting in a barrel-shaped structure. The two end rings are each formed by seven alpha subunits, and the two central rings are each formed by seven beta subunits. The catalytic chamber with the active sites is on the inside of the barrel.

It is found in the cytoplasm. It localises to the nucleus. Functionally, the proteasome is a multicatalytic proteinase complex which is characterized by its ability to cleave peptides with Arg, Phe, Tyr, Leu, and Glu adjacent to the leaving group at neutral or slightly basic pH. The proteasome has an ATP-dependent proteolytic activity. This chain is Proteasome subunit alpha type-2-B (PAB2), found in Arabidopsis thaliana (Mouse-ear cress).